The sequence spans 196 residues: uncharacterized protein (196 aa).

The tract at residues M1–E21 is disordered.

This is an uncharacterized protein from Mus musculus (Mouse).